Here is an 88-residue protein sequence, read N- to C-terminus: Early E1B 9 kDa protein (88 aa).

The interval 23 to 88 (NMEGSQDEDN…DLFPELRRLP (66 aa)) is disordered. Over residues 34-44 (RLLASAASGSS) the composition is skewed to low complexity.

This is Early E1B 9 kDa protein from Homo sapiens (Human).